A 273-amino-acid chain; its full sequence is Soluble P-type ATPase-like phosphatase (273 aa).

The 4-aspartylphosphate intermediate role is filled by D8.

Belongs to the cation transport ATPase (P-type) (TC 3.A.3) family. Type IB subfamily. Requires Mg(2+) as cofactor.

Inhibited by orthovanadate. Its function is as follows. Most probably acts as a phosphatase in the cytosol. The polypeptide is Soluble P-type ATPase-like phosphatase (patS) (Methanocaldococcus jannaschii (strain ATCC 43067 / DSM 2661 / JAL-1 / JCM 10045 / NBRC 100440) (Methanococcus jannaschii)).